Here is a 245-residue protein sequence, read N- to C-terminus: Probable transcriptional regulatory protein pc1328 (245 aa).

Belongs to the TACO1 family.

The protein resides in the cytoplasm. In Protochlamydia amoebophila (strain UWE25), this protein is Probable transcriptional regulatory protein pc1328.